The chain runs to 467 residues: ATP synthase subunit beta 1 (467 aa).

150 to 157 (GGAGVGKT) lines the ATP pocket.

This sequence belongs to the ATPase alpha/beta chains family. F-type ATPases have 2 components, CF(1) - the catalytic core - and CF(0) - the membrane proton channel. CF(1) has five subunits: alpha(3), beta(3), gamma(1), delta(1), epsilon(1). CF(0) has three main subunits: a(1), b(2) and c(9-12). The alpha and beta chains form an alternating ring which encloses part of the gamma chain. CF(1) is attached to CF(0) by a central stalk formed by the gamma and epsilon chains, while a peripheral stalk is formed by the delta and b chains.

The protein resides in the cell inner membrane. The catalysed reaction is ATP + H2O + 4 H(+)(in) = ADP + phosphate + 5 H(+)(out). In terms of biological role, produces ATP from ADP in the presence of a proton gradient across the membrane. The catalytic sites are hosted primarily by the beta subunits. The chain is ATP synthase subunit beta 1 from Vibrio campbellii (strain ATCC BAA-1116).